A 197-amino-acid polypeptide reads, in one-letter code: Small ribosomal subunit protein uS4B (197 aa).

The S4 RNA-binding domain maps to 88 to 150 (SRLDNMVYRM…SRKTEMFVNN (63 aa)).

The protein belongs to the universal ribosomal protein uS4 family. In terms of assembly, part of the 30S ribosomal subunit. Contacts protein S5. The interaction surface between S4 and S5 is involved in control of translational fidelity.

One of the primary rRNA binding proteins, it binds directly to 16S rRNA where it nucleates assembly of the body of the 30S subunit. Its function is as follows. With S5 and S12 plays an important role in translational accuracy. This is Small ribosomal subunit protein uS4B (rpsD2) from Clostridium perfringens (strain 13 / Type A).